A 34-amino-acid chain; its full sequence is Potassium channel toxin alpha-KTx 6.3 (34 aa).

4 cysteine pairs are disulfide-bonded: Cys3-Cys24, Cys9-Cys29, Cys13-Cys31, and Cys19-Cys34. Cysteine amide is present on Cys34.

Belongs to the short scorpion toxin superfamily. Potassium channel inhibitor family. Alpha-KTx 06 subfamily. Amidated. The amidated toxin shows 5-fold more affinity for Kv1.3/KCNA3 than the synthetic carboxylated form. As to expression, expressed by the venom gland.

The protein resides in the secreted. Potently blocks voltage-gated potassium channels Kv1.1/KCNA1 (IC(50)=7-11 nM) and Kv1.3/KCNA3 (IC(50)=11-29 pM). Also mildly blocks intermediate (IK) conductance calcium-activated potassium channels (KCa3.1/KCNN4) and ERG1/Kv11.1/KCNH2. Shows ability to suppress proliferation of lymphocytes, which are known to be sensitive to Kv1.3/KCNA3 homotetrameric channel block. In Heterometrus spinifer (Asia giant forest scorpion), this protein is Potassium channel toxin alpha-KTx 6.3.